A 463-amino-acid polypeptide reads, in one-letter code: Golgi-associated PDZ and coiled-coil motif-containing protein (463 aa).

Serine 2 is modified (N-acetylserine). A coiled-coil region spans residues 85–201 (AQTVSQINHK…RHIAVLQAEV (117 aa)). Residues 289-372 (KVLLLKEDHE…EIEFEVVYVA (84 aa)) form the PDZ domain. Serine 402 and serine 405 each carry phosphoserine.

In terms of assembly, homooligomer. Interacts with FZD5. Interacts with FZD8. Interacts with GRID2 and BECN1. Interacts with CSPG5. Interacts with CLCN3. Interacts with STX6. Interacts with CFTR. Interacts with ASIC3. Interacts with GOLGA3. Interacts with NLGN1. Interacts with RHOQ. Interacts with MARCHF2; the interaction leads to CFTR ubiquitination and degradation. May interact with CACNG2. Interacts with CCDC62. As to expression, ubiquitously expressed (at protein level). Expressed in dorsal root glanglion (DRG), spinal cord and brain. Isoform 1 is preferentially expressed in whole brain (at protein level) and cerebellum. Expressed in spermatocytes and spermatides but not in Sertoli cells and spermatogonia.

It is found in the cytoplasm. The protein resides in the golgi apparatus membrane. Its subcellular location is the golgi apparatus. It localises to the trans-Golgi network membrane. The protein localises to the synapse. It is found in the postsynaptic density. The protein resides in the cell projection. Its subcellular location is the dendrite. In terms of biological role, plays a role in intracellular protein trafficking and degradation. May regulate CFTR chloride currents and acid-induced ASIC3 currents by modulating cell surface expression of both channels. May also regulate the intracellular trafficking of the ADR1B receptor. May play a role in autophagy. Together with MARCHF2 mediates the ubiquitination and lysosomal degradation of CFTR. Overexpression results in CFTR intracellular retention and degradation in the lysosomes. This is Golgi-associated PDZ and coiled-coil motif-containing protein from Mus musculus (Mouse).